Reading from the N-terminus, the 423-residue chain is Zinc-type alcohol dehydrogenase-like protein C1198.01 (423 aa).

A disordered region spans residues 14–36; that stretch reads KQLGHREVSEGSTQPKPDPSGAT. C74, H97, C127, C130, C133, and C141 together coordinate Zn(2+).

This sequence belongs to the zinc-containing alcohol dehydrogenase family. Class-III subfamily. Zn(2+) serves as cofactor.

The protein resides in the golgi apparatus. This chain is Zinc-type alcohol dehydrogenase-like protein C1198.01, found in Schizosaccharomyces pombe (strain 972 / ATCC 24843) (Fission yeast).